The primary structure comprises 299 residues: Oxygen-dependent coproporphyrinogen-III oxidase (299 aa).

Residue S92 participates in substrate binding. 2 residues coordinate Mn(2+): H96 and H106. Residue H106 is the Proton donor of the active site. 108-110 (NVR) lines the substrate pocket. Mn(2+) is bound by residues H145 and H175. Residues 240–275 (YVEFNLVWDRGTLFGLQTGGRTESILMSMPPLVRWE) form an important for dimerization region. Substrate is bound at residue 258–260 (GGR).

The protein belongs to the aerobic coproporphyrinogen-III oxidase family. Homodimer. The cofactor is Mn(2+).

It localises to the cytoplasm. The catalysed reaction is coproporphyrinogen III + O2 + 2 H(+) = protoporphyrinogen IX + 2 CO2 + 2 H2O. Its pathway is porphyrin-containing compound metabolism; protoporphyrin-IX biosynthesis; protoporphyrinogen-IX from coproporphyrinogen-III (O2 route): step 1/1. Functionally, involved in the heme biosynthesis. Catalyzes the aerobic oxidative decarboxylation of propionate groups of rings A and B of coproporphyrinogen-III to yield the vinyl groups in protoporphyrinogen-IX. The protein is Oxygen-dependent coproporphyrinogen-III oxidase of Escherichia coli O127:H6 (strain E2348/69 / EPEC).